The following is a 176-amino-acid chain: ATP-dependent protease subunit HslV (176 aa).

The active site involves Thr6. 3 residues coordinate Na(+): Gly161, Cys164, and Thr167.

Belongs to the peptidase T1B family. HslV subfamily. As to quaternary structure, a double ring-shaped homohexamer of HslV is capped on each side by a ring-shaped HslU homohexamer. The assembly of the HslU/HslV complex is dependent on binding of ATP.

It localises to the cytoplasm. It carries out the reaction ATP-dependent cleavage of peptide bonds with broad specificity.. Its activity is regulated as follows. Allosterically activated by HslU binding. In terms of biological role, protease subunit of a proteasome-like degradation complex believed to be a general protein degrading machinery. This chain is ATP-dependent protease subunit HslV, found in Thermotoga sp. (strain RQ2).